Reading from the N-terminus, the 578-residue chain is Hemolysin 4 (578 aa).

Positions 289 to 322 (KDGPKASWRRRPSSASSVTMPTTPRIIGSNARPE) are disordered. The Ricin B-type lectin domain occupies 448-539 (RPVNLQLGGF…LSNLSAHQLL (92 aa)).

Belongs to the HlyA hemolysin family.

Functionally, bacterial hemolysins are exotoxins that attack blood cell membranes and cause cell rupture by mechanisms not clearly defined. The polypeptide is Hemolysin 4 (ash4) (Aeromonas salmonicida).